We begin with the raw amino-acid sequence, 153 residues long: Ribosome maturation factor RimP (153 aa).

Belongs to the RimP family.

The protein localises to the cytoplasm. Its function is as follows. Required for maturation of 30S ribosomal subunits. The polypeptide is Ribosome maturation factor RimP (Acidithiobacillus ferrooxidans (strain ATCC 53993 / BNL-5-31) (Leptospirillum ferrooxidans (ATCC 53993))).